Here is a 203-residue protein sequence, read N- to C-terminus: IMP cyclohydrolase (203 aa).

This sequence belongs to the archaeal IMP cyclohydrolase family.

The enzyme catalyses IMP + H2O = 5-formamido-1-(5-phospho-D-ribosyl)imidazole-4-carboxamide. The protein operates within purine metabolism; IMP biosynthesis via de novo pathway; IMP from 5-formamido-1-(5-phospho-D-ribosyl)imidazole-4-carboxamide: step 1/1. Functionally, catalyzes the cyclization of 5-formylamidoimidazole-4-carboxamide ribonucleotide to IMP. In Methanococcus aeolicus (strain ATCC BAA-1280 / DSM 17508 / OCM 812 / Nankai-3), this protein is IMP cyclohydrolase.